The following is a 125-amino-acid chain: Small ribosomal subunit protein uS12 (125 aa).

The tract at residues 1–24 is disordered; that stretch reads MPTISQLVRKPRKAKRTKSKVPAL. Residues 9–19 are compositionally biased toward basic residues; the sequence is RKPRKAKRTKS. Aspartate 89 carries the 3-methylthioaspartic acid modification. The disordered stretch occupies residues 101–125; that stretch reads SLDTAGVKDRKQARSKYGSKRPKSA. The segment covering 113–125 has biased composition (basic residues); that stretch reads ARSKYGSKRPKSA.

The protein belongs to the universal ribosomal protein uS12 family. As to quaternary structure, part of the 30S ribosomal subunit. Contacts proteins S8 and S17. May interact with IF1 in the 30S initiation complex.

In terms of biological role, with S4 and S5 plays an important role in translational accuracy. Its function is as follows. Interacts with and stabilizes bases of the 16S rRNA that are involved in tRNA selection in the A site and with the mRNA backbone. Located at the interface of the 30S and 50S subunits, it traverses the body of the 30S subunit contacting proteins on the other side and probably holding the rRNA structure together. The combined cluster of proteins S8, S12 and S17 appears to hold together the shoulder and platform of the 30S subunit. The protein is Small ribosomal subunit protein uS12 of Nitrosomonas europaea (strain ATCC 19718 / CIP 103999 / KCTC 2705 / NBRC 14298).